Here is a 791-residue protein sequence, read N- to C-terminus: Valine--tRNA ligase (791 aa).

The 'HIGH' region signature appears at P40–H50. The 'KMSKS' region motif lies at K521 to S525. Position 524 (K524) interacts with ATP.

This sequence belongs to the class-I aminoacyl-tRNA synthetase family. ValS type 2 subfamily.

It is found in the cytoplasm. The catalysed reaction is tRNA(Val) + L-valine + ATP = L-valyl-tRNA(Val) + AMP + diphosphate. Its function is as follows. Catalyzes the attachment of valine to tRNA(Val). As ValRS can inadvertently accommodate and process structurally similar amino acids such as threonine, to avoid such errors, it has a 'posttransfer' editing activity that hydrolyzes mischarged Thr-tRNA(Val) in a tRNA-dependent manner. This chain is Valine--tRNA ligase, found in Thermoplasma acidophilum (strain ATCC 25905 / DSM 1728 / JCM 9062 / NBRC 15155 / AMRC-C165).